The chain runs to 355 residues: S-adenosylmethionine:tRNA ribosyltransferase-isomerase (355 aa).

The protein belongs to the QueA family. Monomer.

It is found in the cytoplasm. The enzyme catalyses 7-aminomethyl-7-carbaguanosine(34) in tRNA + S-adenosyl-L-methionine = epoxyqueuosine(34) in tRNA + adenine + L-methionine + 2 H(+). The protein operates within tRNA modification; tRNA-queuosine biosynthesis. Transfers and isomerizes the ribose moiety from AdoMet to the 7-aminomethyl group of 7-deazaguanine (preQ1-tRNA) to give epoxyqueuosine (oQ-tRNA). This is S-adenosylmethionine:tRNA ribosyltransferase-isomerase from Erwinia tasmaniensis (strain DSM 17950 / CFBP 7177 / CIP 109463 / NCPPB 4357 / Et1/99).